A 233-amino-acid polypeptide reads, in one-letter code: Outer membrane protein MIP (233 aa).

Residues 1-20 form the signal peptide; the sequence is MKMKLVTAAVMGLAMSTAMA. Residues 144 to 233 form the PPIase FKBP-type domain; it reads SDTVTVEYTG…IHLISVKKSS (90 aa).

The protein belongs to the FKBP-type PPIase family.

The protein resides in the cell outer membrane. It catalyses the reaction [protein]-peptidylproline (omega=180) = [protein]-peptidylproline (omega=0). Functionally, essential virulence factor associated with macrophage infectivity. Exhibits PPIase activity. This chain is Outer membrane protein MIP (mip), found in Legionella pneumophila (strain Corby).